Reading from the N-terminus, the 557-residue chain is Protein NRT1/ PTR FAMILY 2.6 (557 aa).

12 consecutive transmembrane segments (helical) span residues 26–46 (ITFP…LGWL), 67–87 (ILNI…IAAD), 89–109 (FFGT…GVVL), 136–156 (NIQL…AGGL), 177–197 (FFNW…TAIV), 203–223 (ISWS…LIVF), 318–338 (IIPL…QLGL), 356–376 (IPAG…IIVN), 398–418 (VGIG…VEAK), 439–459 (VLWL…HFPG), 478–498 (SITS…IDLI), and 518–538 (YWIL…CSWF).

The protein belongs to the major facilitator superfamily. Proton-dependent oligopeptide transporter (POT/PTR) (TC 2.A.17) family. As to expression, expressed in roots.

The protein resides in the membrane. Transporter involved in a passive nitrate efflux. The polypeptide is Protein NRT1/ PTR FAMILY 2.6 (NPF2.6) (Arabidopsis thaliana (Mouse-ear cress)).